The chain runs to 451 residues: Probable NADH dehydrogenase (451 aa).

Residue Lys41–Arg71 participates in FAD binding. Leu199–Glu236 is a binding site for NAD(+).

The protein belongs to the NADH dehydrogenase family. Requires FAD as cofactor.

The enzyme catalyses a ubiquinone + NADH + 5 H(+)(in) = a ubiquinol + NAD(+) + 4 H(+)(out). This is Probable NADH dehydrogenase from Dictyostelium discoideum (Social amoeba).